Consider the following 181-residue polypeptide: Oligoribonuclease (181 aa).

One can recognise an Exonuclease domain in the interval Leu8–Leu171. Tyr129 is a catalytic residue.

It belongs to the oligoribonuclease family.

The protein localises to the cytoplasm. Functionally, 3'-to-5' exoribonuclease specific for small oligoribonucleotides. The sequence is that of Oligoribonuclease from Pseudoalteromonas atlantica (strain T6c / ATCC BAA-1087).